Consider the following 189-residue polypeptide: Large ribosomal subunit protein bL9 (189 aa).

This sequence belongs to the bacterial ribosomal protein bL9 family.

Its function is as follows. Binds to the 23S rRNA. This Brucella melitensis biotype 2 (strain ATCC 23457) protein is Large ribosomal subunit protein bL9.